We begin with the raw amino-acid sequence, 543 residues long: Phosphoribosylaminoimidazole carboxylase (543 aa).

One can recognise an ATP-grasp domain in the interval 110 to 297 (KEHLIKNGIA…QFEAHVRAIT (188 aa)). 137–192 (GAKYGFPYMLKSRTMAYDGRGNFVVKDKSYIPEALKVLDDRPLYAEKWAPFSKELA) provides a ligand contact to ATP.

The protein in the C-terminal section; belongs to the AIR carboxylase family. Class I subfamily.

The enzyme catalyses 5-amino-1-(5-phospho-D-ribosyl)imidazole-4-carboxylate + H(+) = 5-amino-1-(5-phospho-beta-D-ribosyl)imidazole + CO2. It participates in purine metabolism; IMP biosynthesis via de novo pathway; 5-amino-1-(5-phospho-D-ribosyl)imidazole-4-carboxylate from 5-amino-1-(5-phospho-D-ribosyl)imidazole (carboxylase route): step 1/1. The protein is Phosphoribosylaminoimidazole carboxylase (ADE1) of Ogataea methanolica (Yeast).